A 246-amino-acid polypeptide reads, in one-letter code: UDP-N-acetyl-D-mannosaminuronic acid transferase (246 aa).

This sequence belongs to the glycosyltransferase 26 family.

It carries out the reaction UDP-N-acetyl-alpha-D-mannosaminouronate + N-acetyl-alpha-D-glucosaminyl-di-trans,octa-cis-undecaprenyl diphosphate = beta-D-ManNAcA-(1-&gt;4)-alpha-D-GlcNAc-di-trans,octa-cis-undecaprenyl diphosphate + UDP + H(+). The protein operates within bacterial outer membrane biogenesis; enterobacterial common antigen biosynthesis. In terms of biological role, catalyzes the synthesis of Und-PP-GlcNAc-ManNAcA (Lipid II), the second lipid-linked intermediate involved in enterobacterial common antigen (ECA) synthesis. This is UDP-N-acetyl-D-mannosaminuronic acid transferase from Salmonella paratyphi A (strain ATCC 9150 / SARB42).